Here is a 162-residue protein sequence, read N- to C-terminus: Ribonuclease P protein component (162 aa).

Residues 1 to 67 (MDEKDLAAQP…GGKLVSLKGD (67 aa)) form a disordered region. The segment covering 21–31 (GPHEDPRRQEG) has biased composition (basic and acidic residues).

It belongs to the RnpA family. As to quaternary structure, consists of a catalytic RNA component (M1 or rnpB) and a protein subunit.

It catalyses the reaction Endonucleolytic cleavage of RNA, removing 5'-extranucleotides from tRNA precursor.. In terms of biological role, RNaseP catalyzes the removal of the 5'-leader sequence from pre-tRNA to produce the mature 5'-terminus. It can also cleave other RNA substrates such as 4.5S RNA. The protein component plays an auxiliary but essential role in vivo by binding to the 5'-leader sequence and broadening the substrate specificity of the ribozyme. In Thermus brockianus, this protein is Ribonuclease P protein component.